Consider the following 388-residue polypeptide: DNA primase small subunit PriS (388 aa).

Active-site residues include Asp-100, Asp-102, and Asp-288.

This sequence belongs to the eukaryotic-type primase small subunit family. As to quaternary structure, heterodimer of a small subunit (PriS) and a large subunit (PriL). Requires Mg(2+) as cofactor. Mn(2+) serves as cofactor.

Catalytic subunit of DNA primase, an RNA polymerase that catalyzes the synthesis of short RNA molecules used as primers for DNA polymerase during DNA replication. The small subunit contains the primase catalytic core and has DNA synthesis activity on its own. Binding to the large subunit stabilizes and modulates the activity, increasing the rate of DNA synthesis while decreasing the length of the DNA fragments, and conferring RNA synthesis capability. The DNA polymerase activity may enable DNA primase to also catalyze primer extension after primer synthesis. May also play a role in DNA repair. This is DNA primase small subunit PriS from Methanospirillum hungatei JF-1 (strain ATCC 27890 / DSM 864 / NBRC 100397 / JF-1).